The chain runs to 1104 residues: Nitrite reductase [NAD(P)H] (1104 aa).

Position 44 to 79 (44 to 79) interacts with FAD; sequence QKIVVVGLGMVAVAFIEKLVKLDSERRKYDIVVIGE. 146-176 provides a ligand contact to NAD(+); the sequence is YDILVLATGSDAVLPTSTPGHDAKGIFVYRT. The segment at 396–419 is disordered; it reads KFLPGQRPSAESIGAADPNREEEP. 4 residues coordinate [2Fe-2S] cluster: Cys500, Cys502, Cys535, and Cys538. The [4Fe-4S] cluster site is built by Cys720, Cys726, Cys760, and Cys764. Residue Cys764 participates in siroheme binding. One can recognise a Rieske domain in the interval 932–1040; sequence WQPVIKADYF…VEEREDGWIY (109 aa). [2Fe-2S] cluster-binding residues include Cys976, His978, Cys1001, and His1004. The interval 1081–1104 is disordered; that stretch reads GKRAGAKGIEGSKPTRSPSNTIDW. The segment covering 1094–1104 has biased composition (polar residues); the sequence is PTRSPSNTIDW.

It belongs to the nitrite and sulfite reductase 4Fe-4S domain family. Homodimer. Requires siroheme as cofactor. [4Fe-4S] cluster is required as a cofactor. FAD serves as cofactor. The cofactor is [2Fe-2S] cluster.

The catalysed reaction is NH4(+) + 3 NADP(+) + 2 H2O = nitrite + 3 NADPH + 5 H(+). It catalyses the reaction NH4(+) + 3 NAD(+) + 2 H2O = nitrite + 3 NADH + 5 H(+). The protein operates within nitrogen metabolism; nitrate reduction (assimilation). This chain is Nitrite reductase [NAD(P)H] (niiA), found in Emericella nidulans (strain FGSC A4 / ATCC 38163 / CBS 112.46 / NRRL 194 / M139) (Aspergillus nidulans).